Consider the following 203-residue polypeptide: LexA repressor (203 aa).

The segment at residues 30–50 is a DNA-binding region (H-T-H motif); sequence VREICQAVSLKSTSTVHGHLK. Catalysis depends on for autocatalytic cleavage activity residues S127 and K164.

It belongs to the peptidase S24 family. Homodimer.

The enzyme catalyses Hydrolysis of Ala-|-Gly bond in repressor LexA.. Its function is as follows. Represses a number of genes involved in the response to DNA damage (SOS response), including recA and lexA. In the presence of single-stranded DNA, RecA interacts with LexA causing an autocatalytic cleavage which disrupts the DNA-binding part of LexA, leading to derepression of the SOS regulon and eventually DNA repair. The sequence is that of LexA repressor from Clostridium perfringens (strain SM101 / Type A).